We begin with the raw amino-acid sequence, 345 residues long: Acyl-CoA--sterol O-acyltransferase 1 (345 aa).

Transmembrane regions (helical) follow at residues 1-21, 32-52, 54-74, 86-106, 120-140, 148-168, 231-251, 258-278, and 291-311; these read MASF…TFFI, LILF…IYSL, LLGI…LLFA, PLSL…QLSP, GPLI…AYEY, VVLT…LAAT, ILAA…IFFY, DWKM…EIAI, and AISQ…LFLP.

It belongs to the wax synthase family.

The protein localises to the membrane. In terms of biological role, involved in the esterification of cycloartenol. Not implicated in the formation of sterol esters in flowers or during seed maturation. Has a substrate preference toward saturated fatty acyl donors (16:0 &gt; 18:0 &gt; 16:1 &gt; 18:1). Does not require triacyglycerols (TAGs) as a fatty acyl donor, and is unable to acylate diacylglycerol to produce TAG. The polypeptide is Acyl-CoA--sterol O-acyltransferase 1 (ASAT1) (Arabidopsis thaliana (Mouse-ear cress)).